A 252-amino-acid polypeptide reads, in one-letter code: 3-deoxy-manno-octulosonate cytidylyltransferase (252 aa).

It belongs to the KdsB family.

The protein resides in the cytoplasm. The enzyme catalyses 3-deoxy-alpha-D-manno-oct-2-ulosonate + CTP = CMP-3-deoxy-beta-D-manno-octulosonate + diphosphate. It participates in nucleotide-sugar biosynthesis; CMP-3-deoxy-D-manno-octulosonate biosynthesis; CMP-3-deoxy-D-manno-octulosonate from 3-deoxy-D-manno-octulosonate and CTP: step 1/1. The protein operates within bacterial outer membrane biogenesis; lipopolysaccharide biosynthesis. Functionally, activates KDO (a required 8-carbon sugar) for incorporation into bacterial lipopolysaccharide in Gram-negative bacteria. In Trichlorobacter lovleyi (strain ATCC BAA-1151 / DSM 17278 / SZ) (Geobacter lovleyi), this protein is 3-deoxy-manno-octulosonate cytidylyltransferase.